Reading from the N-terminus, the 209-residue chain is Amelotin (209 aa).

The first 16 residues, 1-16 (MRSTILLFCLLGSTRS), serve as a signal peptide directing secretion. The segment at 142–209 (AGANPDVQDG…ATTESANGIQ (68 aa)) is disordered.

It belongs to the amelotin family. Post-translationally, phosphorylated by FAM20C in vitro. O-glycosylated.

Its subcellular location is the secreted. Its function is as follows. Is a promoter of calcium phosphate mineralization, playing a critical role in the formation of the compact, mineralized, aprismatic enamel surface layer during the maturation stage of amelogenesis. The sequence is that of Amelotin (AMTN) from Homo sapiens (Human).